Reading from the N-terminus, the 289-residue chain is Urease accessory protein UreD (289 aa).

The protein belongs to the UreD family. As to quaternary structure, ureD, UreF and UreG form a complex that acts as a GTP-hydrolysis-dependent molecular chaperone, activating the urease apoprotein by helping to assemble the nickel containing metallocenter of UreC. The UreE protein probably delivers the nickel.

Its subcellular location is the cytoplasm. Required for maturation of urease via the functional incorporation of the urease nickel metallocenter. This chain is Urease accessory protein UreD, found in Xanthobacter autotrophicus (strain ATCC BAA-1158 / Py2).